Reading from the N-terminus, the 1016-residue chain is DENN domain-containing protein 1A (1016 aa).

The uDENN domain occupies 13–145 (FEVYVEVAYP…HRLPIPDPGV (133 aa)). Positions 162-298 (ELPSIPENRN…VISSLKNRLK (137 aa)) constitute a cDENN domain. In terms of domain architecture, dDENN spans 300-378 (VSTTTGDGVA…DGRLDLLNSG (79 aa)). The short motif at 381 to 385 (FSDVF) is the FXDXF motif element. Residues 453 to 565 (DITENGCVSS…GPTPAPPDRA (113 aa)) are disordered. Residue S473 is modified to Phosphoserine. The segment covering 479 to 489 (QDPRLREDRRP) has biased composition (basic and acidic residues). Basic residues predominate over residues 500–509 (PRPHVVRRPK). At T519 the chain carries Phosphothreonine. Phosphoserine is present on residues S520, S522, S523, S536, S538, and S546. Positions 569–578 (DLLEDVFSSL) match the Clathrin box motif. S592 is subject to Phosphoserine. The disordered stretch occupies residues 681–737 (LSPSIKEETPIPTPGSITIPRPQGRKTPELGIVPPPPTARPAKLQAAGGPLGDFSSE). At S750 the chain carries Phosphoserine. The residue at position 760 (R760) is an Omega-N-methylarginine. Disordered regions lie at residues 763–783 (PQGP…AGTG) and 935–1016 (SARA…ETFE). The span at 954–970 (LLPPRPPQSLQPTPQPS) shows a compositional bias: pro residues. 2 stretches are compositionally biased toward basic and acidic residues: residues 977–988 (DPFEDLLRKTKQ) and 1007–1016 (QLRRQWETFE).

In terms of assembly, interacts with RAB35. Interacts with clathrin and with the adapter protein complex 2, AP-2. Interacts with ITSN1 and SH3GL2. Interacts (when phosphorylated) with YWHAE. In terms of processing, phosphorylated on serine and/or threonine in an Akt-dependent manner. Phosphorylation probably regulates the guanine nucleotide exchange factor (GEF) activity, possibly by disrupting an intramolecular interaction between the DENN domain and the C-terminus of the protein, thereby relieving the autoinhibition.

The protein resides in the cytoplasmic vesicle. The protein localises to the clathrin-coated vesicle membrane. It localises to the presynaptic cell membrane. Its activity is regulated as follows. The guanine nucleotide exchange factor (GEF) activity is autoinhibited. Autoinhibition may be the result of intramolecular interaction between the DENN domain and the C-terminus, which is disrupted upon phosphorylation. Activation is regulated by Akt activation. Functionally, guanine nucleotide exchange factor (GEF) regulating clathrin-mediated endocytosis through RAB35 activation. Promotes the exchange of GDP to GTP, converting inactive GDP-bound RAB35 into its active GTP-bound form. Regulates clathrin-mediated endocytosis of synaptic vesicles and mediates exit from early endosomes. Binds phosphatidylinositol-phosphates (PtdInsPs), with some preference for PtdIns(3)P. The polypeptide is DENN domain-containing protein 1A (Dennd1a) (Mus musculus (Mouse)).